The chain runs to 372 residues: Chaperone protein DnaJ (372 aa).

The J domain occupies 5–70; sequence DYYDLLEVSR…EKRAGYDRYG (66 aa). A CR-type zinc finger spans residues 134 to 212; sequence GIQAPIHYVT…CGGSGRKRDE (79 aa). C147, C150, C164, C167, C186, C189, C200, and C203 together coordinate Zn(2+). CXXCXGXG motif repeat units lie at residues 147 to 154, 164 to 171, 186 to 193, and 200 to 207; these read CNTCQGTG, CNTCQGSG, CTTCYGEG, and CKKCGGSG.

This sequence belongs to the DnaJ family. Homodimer. Requires Zn(2+) as cofactor.

The protein resides in the cytoplasm. Its function is as follows. Participates actively in the response to hyperosmotic and heat shock by preventing the aggregation of stress-denatured proteins and by disaggregating proteins, also in an autonomous, DnaK-independent fashion. Unfolded proteins bind initially to DnaJ; upon interaction with the DnaJ-bound protein, DnaK hydrolyzes its bound ATP, resulting in the formation of a stable complex. GrpE releases ADP from DnaK; ATP binding to DnaK triggers the release of the substrate protein, thus completing the reaction cycle. Several rounds of ATP-dependent interactions between DnaJ, DnaK and GrpE are required for fully efficient folding. Also involved, together with DnaK and GrpE, in the DNA replication of plasmids through activation of initiation proteins. This is Chaperone protein DnaJ from Wolbachia pipientis subsp. Culex pipiens (strain wPip).